Consider the following 247-residue polypeptide: Acidic 27 kDa endochitinase (247 aa).

Residues 1–16 form the signal peptide; it reads MVLCCVFLLFLTGSFA. E84 (proton donor) is an active-site residue. C206 and C238 form a disulfide bridge.

The protein belongs to the glycosyl hydrolase 19 family. Chitinase class II subfamily.

Its subcellular location is the secreted. It is found in the extracellular space. It catalyses the reaction Random endo-hydrolysis of N-acetyl-beta-D-glucosaminide (1-&gt;4)-beta-linkages in chitin and chitodextrins.. Functionally, defense against chitin-containing fungal pathogens. The protein is Acidic 27 kDa endochitinase (CHI17) of Solanum lycopersicum (Tomato).